The primary structure comprises 333 residues: Succinylglutamate desuccinylase (333 aa).

Positions 56, 59, and 149 each coordinate Zn(2+). The active site involves glutamate 214.

The protein belongs to the AspA/AstE family. Succinylglutamate desuccinylase subfamily. Zn(2+) serves as cofactor.

The catalysed reaction is N-succinyl-L-glutamate + H2O = L-glutamate + succinate. It functions in the pathway amino-acid degradation; L-arginine degradation via AST pathway; L-glutamate and succinate from L-arginine: step 5/5. Its function is as follows. Transforms N(2)-succinylglutamate into succinate and glutamate. The chain is Succinylglutamate desuccinylase from Chromobacterium violaceum (strain ATCC 12472 / DSM 30191 / JCM 1249 / CCUG 213 / NBRC 12614 / NCIMB 9131 / NCTC 9757 / MK).